The chain runs to 424 residues: Phosphomethylpyrimidine synthase (424 aa).

Residues Asn-66, Met-95, Tyr-124, His-163, 185–187, 226–229, and Glu-265 contribute to the substrate site; these read SRG and DGMR. His-269 provides a ligand contact to Zn(2+). Phe-292 is a binding site for substrate. Residue His-333 coordinates Zn(2+). [4Fe-4S] cluster-binding residues include Cys-408, Cys-411, and Cys-415.

This sequence belongs to the ThiC family. The cofactor is [4Fe-4S] cluster.

It carries out the reaction 5-amino-1-(5-phospho-beta-D-ribosyl)imidazole + S-adenosyl-L-methionine = 4-amino-2-methyl-5-(phosphooxymethyl)pyrimidine + CO + 5'-deoxyadenosine + formate + L-methionine + 3 H(+). Its pathway is cofactor biosynthesis; thiamine diphosphate biosynthesis. In terms of biological role, catalyzes the synthesis of the hydroxymethylpyrimidine phosphate (HMP-P) moiety of thiamine from aminoimidazole ribotide (AIR) in a radical S-adenosyl-L-methionine (SAM)-dependent reaction. The sequence is that of Phosphomethylpyrimidine synthase from Thermotoga petrophila (strain ATCC BAA-488 / DSM 13995 / JCM 10881 / RKU-1).